Consider the following 604-residue polypeptide: Elongation factor 4 (604 aa).

The region spanning 10-191 (KNIRNFSIIA…KIITTIPAPS (182 aa)) is the tr-type G domain. Residues 22–27 (DHGKST) and 138–141 (NKID) each bind GTP.

It belongs to the TRAFAC class translation factor GTPase superfamily. Classic translation factor GTPase family. LepA subfamily.

The protein resides in the cell inner membrane. The catalysed reaction is GTP + H2O = GDP + phosphate + H(+). Its function is as follows. Required for accurate and efficient protein synthesis under certain stress conditions. May act as a fidelity factor of the translation reaction, by catalyzing a one-codon backward translocation of tRNAs on improperly translocated ribosomes. Back-translocation proceeds from a post-translocation (POST) complex to a pre-translocation (PRE) complex, thus giving elongation factor G a second chance to translocate the tRNAs correctly. Binds to ribosomes in a GTP-dependent manner. This chain is Elongation factor 4, found in Helicobacter pylori (strain P12).